The chain runs to 533 residues: NEDD8-activating enzyme E1 regulatory subunit (533 aa).

The segment at 330 to 343 is interaction with uba3; the sequence is DMIADSDKFIKLQN.

The protein belongs to the ubiquitin-activating E1 family. ULA1 subfamily. In terms of assembly, heterodimer of uba3 and nae1. The complex binds nedd8 and ube2m.

The protein operates within protein modification; protein neddylation. Functionally, regulatory subunit of the dimeric uba3-nae1 E1 enzyme. E1 activates nedd8 by first adenylating its C-terminal glycine residue with ATP, thereafter linking this residue to the side chain of the catalytic cysteine, yielding a nedd8-uba3 thioester and free AMP. E1 finally transfers nedd8 to the catalytic cysteine of ube2m. The covalent attachment of nedd8 to target proteins is known as 'neddylation' and the process is involved in the regulation of cell growth, viability and development. In Xenopus laevis (African clawed frog), this protein is NEDD8-activating enzyme E1 regulatory subunit (nae1).